The primary structure comprises 74 residues: Large ribosomal subunit protein bL31 (74 aa).

The Zn(2+) site is built by Cys16, Cys18, Cys38, and Cys41.

This sequence belongs to the bacterial ribosomal protein bL31 family. Type A subfamily. As to quaternary structure, part of the 50S ribosomal subunit. The cofactor is Zn(2+).

In terms of biological role, binds the 23S rRNA. This Salinispora arenicola (strain CNS-205) protein is Large ribosomal subunit protein bL31.